The chain runs to 194 residues: 7-methyl-GTP pyrophosphatase (194 aa).

Asp-70 functions as the Proton acceptor in the catalytic mechanism.

The protein belongs to the Maf family. YceF subfamily. It depends on a divalent metal cation as a cofactor.

It is found in the cytoplasm. The enzyme catalyses N(7)-methyl-GTP + H2O = N(7)-methyl-GMP + diphosphate + H(+). Functionally, nucleoside triphosphate pyrophosphatase that hydrolyzes 7-methyl-GTP (m(7)GTP). May have a dual role in cell division arrest and in preventing the incorporation of modified nucleotides into cellular nucleic acids. In Vibrio vulnificus (strain CMCP6), this protein is 7-methyl-GTP pyrophosphatase.